Reading from the N-terminus, the 482-residue chain is Probable glycine dehydrogenase (decarboxylating) subunit 2 (482 aa).

K264 is modified (N6-(pyridoxal phosphate)lysine).

Belongs to the GcvP family. C-terminal subunit subfamily. In terms of assembly, the glycine cleavage system is composed of four proteins: P, T, L and H. In this organism, the P 'protein' is a heterodimer of two subunits. Pyridoxal 5'-phosphate serves as cofactor.

It catalyses the reaction N(6)-[(R)-lipoyl]-L-lysyl-[glycine-cleavage complex H protein] + glycine + H(+) = N(6)-[(R)-S(8)-aminomethyldihydrolipoyl]-L-lysyl-[glycine-cleavage complex H protein] + CO2. Functionally, the glycine cleavage system catalyzes the degradation of glycine. The P protein binds the alpha-amino group of glycine through its pyridoxal phosphate cofactor; CO(2) is released and the remaining methylamine moiety is then transferred to the lipoamide cofactor of the H protein. This Treponema denticola (strain ATCC 35405 / DSM 14222 / CIP 103919 / JCM 8153 / KCTC 15104) protein is Probable glycine dehydrogenase (decarboxylating) subunit 2.